Reading from the N-terminus, the 291-residue chain is MGVVVVSVVTLLDQRNALPRTSADASPALWSFLLRQCRILASEPLGTPVVVRPANLRRLAEPLMDLPKFTRPIVRTRSCRCPPNTTTGLFAEDDPLESIEILDAPACFRLLHQERPGPHRLYHLWVVGAADLCVPFFEYAQKTRLGFRFIATKTNDAWVGEPWPLPDRFLPERTVSWTPFPAAPNHPLENLLSRYEYQYGVVVPGDRERSCLRWLRSLVAPHNKPRPASSRPHPATHPTQRPCFTCMGRPEIPDEPSWQTGDDDPQNPGPPLAVGDEWPPSSHVCYPITNL.

G2 is modified (N-acetylglycine; by host). A disordered region spans residues 223-281 (NKPRPASSRPHPATHPTQRPCFTCMGRPEIPDEPSWQTGDDDPQNPGPPLAVGDEWPPS).

Belongs to the herpesviridae HHV-1 US2 protein family. In terms of assembly, interacts with host KRT18. Interacts with host MAP3K7; this interaction induces host NF-kappa-B pathway.

It localises to the virion. The protein localises to the host cytoplasm. Its subcellular location is the host cell surface. It is found in the host nucleus. Functionally, plays a role in the activation of the host NF-kappa-B pathway by interacting with and thus activating the component MAP3K7. The sequence is that of Protein US2 from Human herpesvirus 2 (strain HG52) (HHV-2).